The primary structure comprises 395 residues: uncharacterized protein (395 aa).

An N-terminal signal peptide occupies residues 1–18 (MKHVIMLYFIAAATLFSS). C19 carries the N-palmitoyl cysteine lipid modification. C19 carries S-diacylglycerol cysteine lipidation.

The protein resides in the cell outer membrane. Its function is as follows. May be involved in ulvan degradation. Ulvan is the main polysaccharide component of the Ulvales (green seaweed) cell wall. It is composed of disaccharide building blocks comprising 3-sulfated rhamnose (Rha3S) linked to D-glucuronic acid (GlcA), L-iduronic acid (IduA), or D-xylose (Xyl). This is an uncharacterized protein from Formosa agariphila (strain DSM 15362 / KCTC 12365 / LMG 23005 / KMM 3901 / M-2Alg 35-1).